Consider the following 1201-residue polypeptide: DNA-directed RNA polymerase subunit beta' (1201 aa).

Zn(2+)-binding residues include Cys-60, Cys-62, Cys-75, and Cys-78. Residues Asp-449, Asp-451, and Asp-453 each coordinate Mg(2+). Cys-818, Cys-892, Cys-899, and Cys-902 together coordinate Zn(2+).

It belongs to the RNA polymerase beta' chain family. In terms of assembly, the RNAP catalytic core consists of 2 alpha, 1 beta, 1 beta' and 1 omega subunit. When a sigma factor is associated with the core the holoenzyme is formed, which can initiate transcription. Requires Mg(2+) as cofactor. Zn(2+) serves as cofactor.

The enzyme catalyses RNA(n) + a ribonucleoside 5'-triphosphate = RNA(n+1) + diphosphate. Its function is as follows. DNA-dependent RNA polymerase catalyzes the transcription of DNA into RNA using the four ribonucleoside triphosphates as substrates. This Listeria welshimeri serovar 6b (strain ATCC 35897 / DSM 20650 / CCUG 15529 / CIP 8149 / NCTC 11857 / SLCC 5334 / V8) protein is DNA-directed RNA polymerase subunit beta'.